Consider the following 488-residue polypeptide: Glutamyl-tRNA(Gln) amidotransferase subunit A (488 aa).

Residues Lys77 and Ser152 each act as charge relay system in the active site. The active-site Acyl-ester intermediate is the Ser176.

Belongs to the amidase family. GatA subfamily. As to quaternary structure, heterotrimer of A, B and C subunits.

The enzyme catalyses L-glutamyl-tRNA(Gln) + L-glutamine + ATP + H2O = L-glutaminyl-tRNA(Gln) + L-glutamate + ADP + phosphate + H(+). Allows the formation of correctly charged Gln-tRNA(Gln) through the transamidation of misacylated Glu-tRNA(Gln) in organisms which lack glutaminyl-tRNA synthetase. The reaction takes place in the presence of glutamine and ATP through an activated gamma-phospho-Glu-tRNA(Gln). This chain is Glutamyl-tRNA(Gln) amidotransferase subunit A, found in Latilactobacillus sakei subsp. sakei (strain 23K) (Lactobacillus sakei subsp. sakei).